A 511-amino-acid polypeptide reads, in one-letter code: Bifunctional purine biosynthesis protein PurH (511 aa).

The region spanning 1–145 (MKKRALVSVS…KNHKFVSVIV (145 aa)) is the MGS-like domain.

Belongs to the PurH family.

It catalyses the reaction (6R)-10-formyltetrahydrofolate + 5-amino-1-(5-phospho-beta-D-ribosyl)imidazole-4-carboxamide = 5-formamido-1-(5-phospho-D-ribosyl)imidazole-4-carboxamide + (6S)-5,6,7,8-tetrahydrofolate. The catalysed reaction is IMP + H2O = 5-formamido-1-(5-phospho-D-ribosyl)imidazole-4-carboxamide. Its pathway is purine metabolism; IMP biosynthesis via de novo pathway; 5-formamido-1-(5-phospho-D-ribosyl)imidazole-4-carboxamide from 5-amino-1-(5-phospho-D-ribosyl)imidazole-4-carboxamide (10-formyl THF route): step 1/1. It functions in the pathway purine metabolism; IMP biosynthesis via de novo pathway; IMP from 5-formamido-1-(5-phospho-D-ribosyl)imidazole-4-carboxamide: step 1/1. This Bacillus thuringiensis subsp. konkukian (strain 97-27) protein is Bifunctional purine biosynthesis protein PurH.